Consider the following 75-residue polypeptide: Small ribosomal subunit protein bS18 (75 aa).

It belongs to the bacterial ribosomal protein bS18 family. As to quaternary structure, part of the 30S ribosomal subunit. Forms a tight heterodimer with protein bS6.

In terms of biological role, binds as a heterodimer with protein bS6 to the central domain of the 16S rRNA, where it helps stabilize the platform of the 30S subunit. This Acinetobacter baylyi (strain ATCC 33305 / BD413 / ADP1) protein is Small ribosomal subunit protein bS18.